Reading from the N-terminus, the 204-residue chain is Small heat shock protein, chloroplastic (204 aa).

A disordered region spans residues 34 to 55 (QMGRVDHDHELDDRSNRAPISR). Residues 37-49 (RVDHDHELDDRSN) are compositionally biased toward basic and acidic residues. Positions 98-204 (GSGRAMRRGW…KKDVFQVMVD (107 aa)) constitute a sHSP domain.

Belongs to the small heat shock protein (HSP20) family.

The protein localises to the plastid. It is found in the chloroplast stroma. The chain is Small heat shock protein, chloroplastic (HSP23) from Oxybasis rubra (Red goosefoot).